The primary structure comprises 189 residues: MATPSSLWLGLALLGTLGVLQTPAQASLQPNFQEDKFLGRWFTSGLASNSSWFLEKKKVLSMCKSLVAPAPDGGFNLTSTFLRKDQCVTRTLMLRPAGPPGCYSYTSPHGGSNLEVSVVETDYKNYALLHTESGPSPGPAFRMATLYSRSQAPGAAVREKFTAFAKARGFTEDGIVFLPRNEKCLEEHE.

Residues 1–24 (MATPSSLWLGLALLGTLGVLQTPA) form the signal peptide. Pyrrolidone carboxylic acid is present on Q25. N49 carries an N-linked (GlcNAc...) asparagine glycan. Catalysis depends on C63, which acts as the Nucleophile. N76 carries N-linked (GlcNAc...) asparagine glycosylation. Cysteines 87 and 184 form a disulfide.

Belongs to the calycin superfamily. Lipocalin family. In terms of assembly, monomer. In terms of tissue distribution, abundant in the brain and CNS, where it is expressed in tissues of the blood-brain barrier and secreted into the cerebro-spinal fluid.

It localises to the rough endoplasmic reticulum. The protein localises to the nucleus membrane. It is found in the golgi apparatus. The protein resides in the cytoplasm. Its subcellular location is the perinuclear region. It localises to the secreted. The catalysed reaction is prostaglandin H2 = prostaglandin D2. Its function is as follows. Catalyzes the conversion of PGH2 to PGD2, a prostaglandin involved in smooth muscle contraction/relaxation and a potent inhibitor of platelet aggregation. Involved in a variety of CNS functions, such as sedation, NREM sleep and PGE2-induced allodynia, and may have an anti-apoptotic role in oligodendrocytes. Binds small non-substrate lipophilic molecules, including biliverdin, bilirubin, retinal, retinoic acid and thyroid hormone, and may act as a scavenger for harmful hydrophobic molecules and as a secretory retinoid and thyroid hormone transporter. Possibly involved in development and maintenance of the blood-brain, blood-retina, blood-aqueous humor and blood-testis barrier. It is likely to play important roles in both maturation and maintenance of the central nervous system and male reproductive system. Involved in PLA2G3-dependent maturation of mast cells. PLA2G3 is secreted by immature mast cells and acts on nearby fibroblasts upstream to PTDGS to synthesize PGD2, which in turn promotes mast cell maturation and degranulation via PTGDR. The chain is Prostaglandin-H2 D-isomerase (PTGDS) from Sus scrofa (Pig).